The following is a 552-amino-acid chain: Carotenoid cleavage dioxygenase 8 homolog A, chloroplastic (552 aa).

A chloroplast-targeting transit peptide spans 1-43 (MATSLTLIATPCTAPRSSSSFALAPRLPPRCSNATAARRRAVR). Residues 32–73 (SNATAARRRAVRATTLQSDQEPAGSGDSGATTTKLSASTSVR) form a disordered region. The span at 59–72 (SGATTTKLSASTSV) shows a compositional bias: polar residues. Fe cation contacts are provided by histidine 239, histidine 289, histidine 356, and histidine 543.

This sequence belongs to the carotenoid oxygenase family. Fe(2+) is required as a cofactor. In terms of tissue distribution, highly expressed in panicles, inflorescences and parenchyma cells of the root stele, and at lower levels in shoot apex, leaf buds and xylem parenchyma cells of the stem.

Its subcellular location is the plastid. The protein resides in the chloroplast. Its function is as follows. May be involved in strigolactones biosynthesis. In Oryza sativa subsp. japonica (Rice), this protein is Carotenoid cleavage dioxygenase 8 homolog A, chloroplastic (CCD8A).